The sequence spans 335 residues: UPF0353 protein BCG_1543 (335 aa).

2 helical membrane passes run 18 to 38 and 67 to 87; these read WFFL…LMQL and VPAI…AGPT. One can recognise a VWFA domain in the interval 98–294; the sequence is VVMLVIDVSQ…AELRAVYSSL (197 aa). A helical membrane pass occupies residues 309–329; that stretch reads VGWLRLGALALALAALAALLI.

This sequence belongs to the UPF0353 family.

It is found in the cell membrane. This is UPF0353 protein BCG_1543 from Mycobacterium bovis (strain BCG / Pasteur 1173P2).